We begin with the raw amino-acid sequence, 440 residues long: Glutamate--tRNA ligase 2 (440 aa).

The short motif at 8–18 is the 'HIGH' region element; sequence PSPTGYLHVGN. The short motif at 239-243 is the 'KMSKS' region element; sequence ALSKR. K242 is an ATP binding site.

It belongs to the class-I aminoacyl-tRNA synthetase family. Glutamate--tRNA ligase type 1 subfamily. In terms of assembly, monomer.

It localises to the cytoplasm. The enzyme catalyses tRNA(Glu) + L-glutamate + ATP = L-glutamyl-tRNA(Glu) + AMP + diphosphate. Functionally, catalyzes the attachment of glutamate to tRNA(Glu) in a two-step reaction: glutamate is first activated by ATP to form Glu-AMP and then transferred to the acceptor end of tRNA(Glu). The polypeptide is Glutamate--tRNA ligase 2 (Dinoroseobacter shibae (strain DSM 16493 / NCIMB 14021 / DFL 12)).